The chain runs to 320 residues: Cyclin-D6-1 (320 aa).

Residues 279 to 320 (HHRSASSESERTTTVGSAANSADAKRRCMGPPRQWGVGGPDE) are disordered.

This sequence belongs to the cyclin family. Cyclin D subfamily.

This is Cyclin-D6-1 (CYCD6-1) from Oryza sativa subsp. japonica (Rice).